The following is a 102-amino-acid chain: Carboxysome shell protein CcmK2 (102 aa).

Residues 4 to 90 (AVGMIETLGF…PHENLEYVLP (87 aa)) form the BMC domain.

The protein belongs to the bacterial microcompartments protein family. CcmK subfamily. Homohexamer. Interacts with CcmO in the carboxysome. Interacts with CcmN.

The protein localises to the carboxysome. Functionally, one of the shell proteins of the carboxysome, a polyhedral inclusion where RuBisCO (ribulose bisphosphate carboxylase, rbcL-rbcS) is sequestered. Assembles into hexamers which make sheets that form the facets of the polyhedral carboxysome. The hexamer central pore probably regulates metabolite flux. Its function is as follows. The major shell protein of the carboxysome, a polyhedral inclusion where RuBisCO (ribulose bisphosphate carboxylase, rbcL-rbcS) is sequestered. Hexamers make sheets that form the facets of the polyhedral carboxysome. The shell is 4.5 nm thick, as observed for CcmK hexamers. Required for recruitment of CcmO to the pre-carboxysome. In PCC 7942 there are several CcmK paralogs with presumably functional differences; replacing the central pore residues (34-37) with those of either CcmK4 from this organism (Tyr-Met-Arg-Ala) or from an alpha-type carboxysome forming cyanobacterium (CsoS1 of P.marinus strain MIT 9313, Arg-Glu-Phe-Val) allows the bacterium to make carboxysomes, but the expression level is too low to know if the carboxysome is functional for CO(2) fixation. Beta-carboxysome assembly initiates when soluble RuBisCO is condensed into a liquid matrix in a pre-carboxysome by the RbcS-like domains of probably both CcmM58 and CcmM35. CcmN interacts with the N-terminus of CcmM58, and then recruits the CcmK2 major shell protein via CcmN's encapsulation peptide. Shell formation requires CcmK proteins and CcmO. CcmL caps the otherwise elongated carboxysome. Once fully encapsulated carboxysomes are formed, they migrate within the cell probably via interactions with the cytoskeleton. This chain is Carboxysome shell protein CcmK2, found in Synechococcus elongatus (strain ATCC 33912 / PCC 7942 / FACHB-805) (Anacystis nidulans R2).